The sequence spans 2022 residues: Transient receptor potential cation channel subfamily M member 6 (2022 aa).

Over 1–741 the chain is Cytoplasmic; that stretch reads MKEQPVLERL…MWMGRLKMRK (741 aa). The helical transmembrane segment at 742–762 threads the bilayer; that stretch reads NSWLKIIISIILPPTILTLEF. Residues 763–841 are Extracellular-facing; it reads KSKAEMSHVP…YEFYSAPIVK (79 aa). A helical transmembrane segment spans residues 842 to 862; it reads FWFYTMAYLAFLMLFTYTVLV. Residues 863-905 lie on the Cytoplasmic side of the membrane; the sequence is EMQPQPSVQEWLVSIYIFTNAIEVVREICISEPGKFTQKVKVW. The helical transmembrane segment at 906 to 926 threads the bilayer; it reads ISEYWNLTETVAIGLFSAGFV. Residues 927-939 are Extracellular-facing; it reads LRWGDPPFHTAGR. Residues 940 to 960 traverse the membrane as a helical segment; the sequence is LIYCIDIIFWFSRLLDFFAVN. At 961-972 the chain is on the cytoplasmic side; that stretch reads QHAGPYVTMIAK. The helical transmembrane segment at 973-993 threads the bilayer; it reads MTANMFYIVIIMAIVLLSFGV. Residues 994–1012 are Extracellular-facing; the sequence is ARKAILSPKEPPSWSLARD. The segment at residues 1013–1033 is an intramembrane region (pore-forming); sequence IVFEPYWMIYGEVYAGEIDVC. At 1034 to 1047 the chain is on the extracellular side; it reads SSQPSCPPGSFLTP. Residues 1048 to 1068 traverse the membrane as a helical segment; the sequence is FLQAVYLFVQYIIMVNLLIAF. At 1069–2022 the chain is on the cytoplasmic side; it reads FNNVYLDMES…RNSPEDDMQL (954 aa). The segment at 1479–1516 is disordered; that stretch reads TCDSDSSRSEQHQKQAQDSSLSDNSTRSAQSSECSEVG. Over residues 1483-1493 the composition is skewed to basic and acidic residues; the sequence is DSSRSEQHQKQ. Positions 1494 to 1512 are enriched in polar residues; sequence AQDSSLSDNSTRSAQSSEC. The Alpha-type protein kinase domain maps to 1750–1980; it reads NLDKSMSSWS…CCRKLKLPDL (231 aa). Residues glycine 1777, glycine 1778, leucine 1779, arginine 1780, and lysine 1804 each coordinate ADP. Threonine 1851 carries the post-translational modification Phosphothreonine; by autocatalysis. Residues glutamate 1876 and methionine 1879 each contribute to the ADP site. A Zn(2+)-binding site is contributed by histidine 1909. Aspartate 1923 functions as the Proton acceptor in the catalytic mechanism. Aspartate 1933 provides a ligand contact to ADP. Histidine 1966, cysteine 1968, and cysteine 1972 together coordinate Zn(2+). Positions 1997-2022 are disordered; it reads EIKIESAEEPPARETGRNSPEDDMQL. The segment covering 1998–2016 has biased composition (basic and acidic residues); it reads IKIESAEEPPARETGRNSP.

It in the C-terminal section; belongs to the protein kinase superfamily. Alpha-type protein kinase family. ALPK subfamily. This sequence in the N-terminal section; belongs to the transient receptor (TC 1.A.4) family. LTrpC subfamily. TRPM6 sub-subfamily. In terms of assembly, homomers. Forms heteromers with TRPM7; TRPM6 increases the current amplitude of TRPM6/7 heteromers as compared to TRPM7 homomer. Interacts (via kinase domain) with RACK1. In terms of processing, autophosphorylated; autophosphorylation controlls the protein kinase activity of TRPM6 towards their substrates. Autophosphorylation of Thr-1851 in the kinase domain is essential for the inhibitory effect of RACK1. Post-translationally, the C-terminus of TRPM6 is proteolytically cleaved in vivo, in a cell type-specific fashion, releasing the kinase module from the transmembrane domain. The cleaved kinase fragments are translocated to the nucleus to phosphorylate histones and regulate gene expression. In terms of tissue distribution, highly expressed in kidney and colon. Isoform TRPM6a and isoform TRPM6b, are coexpressed with TRPM7 in kidney, and testis, and are also found in several cell lines of lung origin. Isoform TRPM6c is detected only in testis and in NCI-H510A small cell lung carcinoma cells.

Its subcellular location is the cell membrane. The protein localises to the apical cell membrane. It is found in the nucleus. It catalyses the reaction L-seryl-[protein] + ATP = O-phospho-L-seryl-[protein] + ADP + H(+). The enzyme catalyses L-threonyl-[protein] + ATP = O-phospho-L-threonyl-[protein] + ADP + H(+). It carries out the reaction Mg(2+)(in) = Mg(2+)(out). The catalysed reaction is Ca(2+)(in) = Ca(2+)(out). It catalyses the reaction Zn(2+)(in) = Zn(2+)(out). With respect to regulation, strongly inhibited by intracellular Mg(2+); unlikely to be active at physiological levels of intracellular Mg(2+). In the heteromeric TRPM6-TRPM7 channels complexes, TRPM7 are able to offset the very high sensitivity of TRPM6 to cytosolic Mg(2+) to physiologically relevant concentrations, whereas TRPM6 relieve TRPM7 from the inhibitory action of Mg-ATP. Consequently, the association of TRPM6 with TRPM7 allow for high constitutive activity of TRPM6/7 in the presence of physiological levels of Mg(2+) and Mg-ATP. The kinase activity is controlled through the autophosphorylation of a serine/threonine-rich region located to the N-terminal of the catalytic domain. Its function is as follows. Bifunctional protein that combines an ion channel with an intrinsic kinase domain, enabling it to modulate cellular functions either by conducting ions through the pore or by phosphorylating downstream proteins via its kinase domain. Crucial for Mg(2+) homeostasis. Has an important role in epithelial Mg(2+) transport and in the active Mg(2+) absorption in the gut and kidney. However, whether TRPM6 forms functional homomeric channels by itself or functions primarily as a subunit of heteromeric TRPM6-TRPM7 channels, is still under debate. Functionally, the C-terminal kinase domain can be cleaved from the channel segment in a cell-type-specific fashion. The cleaved kinase fragments can translocate to the nucleus, and bind chromatin-remodeling complex proteins to ultimately phosphorylate specific Ser/Thr residues of histones known to be functionally important for cell differentiation and development. The polypeptide is Transient receptor potential cation channel subfamily M member 6 (TRPM6) (Homo sapiens (Human)).